Consider the following 390-residue polypeptide: Protein snail (390 aa).

The SNAG domain stretch occupies residues 1 to 20 (MAANYKSCPLKKRPIVFVEE). Disordered regions lie at residues 29–65 (ALTKDSQFAQDQPQDLSLKRGRDEETQDYQQPEPKRD) and 162–191 (QSVYSYQQMTPPSSPGSDLETGSEPEDLSV). Composition is skewed to polar residues over residues 32–43 (KDSQFAQDQPQD) and 162–172 (QSVYSYQQMTP). 5 C2H2-type zinc fingers span residues 245-267 (FKCDECQKMYSTSMGLSKHRQFH), 280-302 (HSCEECGKLYTTIGALKMHIRTH), 306-328 (CKCPICGKAFSRPWLLQGHIRTH), 334-356 (FQCPDCPRSFADRSNLRAHQQTH), and 362-385 (YACQVCHKSFSRMSLLNKHSSSNC).

Belongs to the snail C2H2-type zinc-finger protein family.

The protein localises to the nucleus. In terms of biological role, essential for the correct specification of ventral-dorsal patterns. The polypeptide is Protein snail (sna) (Drosophila melanogaster (Fruit fly)).